The sequence spans 92 residues: MGSLRLSTVAIAVVVCLSILLISPTEVDGRQVCDYDKGECNSYEKSSTCIEPCKQLDSKFIGGRCIPVGGITGMGLCVCCRDVQRGAEKESM.

An N-terminal signal peptide occupies residues 1–29 (MGSLRLSTVAIAVVVCLSILLISPTEVDG). Disulfide bonds link Cys33-Cys80, Cys40-Cys65, Cys49-Cys77, and Cys53-Cys79.

Belongs to the DEFL family.

The protein localises to the secreted. This is Defensin-like protein 96 from Arabidopsis thaliana (Mouse-ear cress).